The primary structure comprises 282 residues: 4-diphosphocytidyl-2-C-methyl-D-erythritol kinase (282 aa).

The active site involves K12. 95–105 (PMGGGIGGGSS) is a binding site for ATP. The active site involves D137.

The protein belongs to the GHMP kinase family. IspE subfamily.

The catalysed reaction is 4-CDP-2-C-methyl-D-erythritol + ATP = 4-CDP-2-C-methyl-D-erythritol 2-phosphate + ADP + H(+). It functions in the pathway isoprenoid biosynthesis; isopentenyl diphosphate biosynthesis via DXP pathway; isopentenyl diphosphate from 1-deoxy-D-xylulose 5-phosphate: step 3/6. Functionally, catalyzes the phosphorylation of the position 2 hydroxy group of 4-diphosphocytidyl-2C-methyl-D-erythritol. This chain is 4-diphosphocytidyl-2-C-methyl-D-erythritol kinase, found in Pseudomonas aeruginosa (strain ATCC 15692 / DSM 22644 / CIP 104116 / JCM 14847 / LMG 12228 / 1C / PRS 101 / PAO1).